Consider the following 308-residue polypeptide: Cilia- and flagella-associated protein 73 (308 aa).

Coiled-coil stretches lie at residues 34–143 (RLLE…LEPC) and 175–233 (AALR…WESK).

This sequence belongs to the CFAP73 family.

The protein localises to the cytoplasm. Its subcellular location is the cytoskeleton. The protein resides in the cilium axoneme. Functionally, may play a role in ciliary/flagellar motility by regulating the assembly and the activity of axonemal inner dynein arm. The sequence is that of Cilia- and flagella-associated protein 73 from Homo sapiens (Human).